We begin with the raw amino-acid sequence, 98 residues long: Small ribosomal subunit protein bS21B (98 aa).

The interval 61-98 is disordered; it reads KLQREGLLPMKPKPVFGAGAGGERGGRGGPGAGPRGPR. Over residues 78 to 98 the composition is skewed to gly residues; that stretch reads AGAGGERGGRGGPGAGPRGPR.

The protein belongs to the bacterial ribosomal protein bS21 family.

The protein is Small ribosomal subunit protein bS21B of Bradyrhizobium diazoefficiens (strain JCM 10833 / BCRC 13528 / IAM 13628 / NBRC 14792 / USDA 110).